A 138-amino-acid chain; its full sequence is Extracellular glycoprotein lacritin (138 aa).

A signal peptide spans 1 to 19 (MKFTTLLFLAAVAGALVYA). Positions 20-79 (EDASSDSTGADPAQEAGTSKPNEEISGPAEPASPPETTTTAQETSAAAVQGTAKVTSSRQ) are disordered. Low complexity predominate over residues 43–67 (EISGPAEPASPPETTTTAQETSAAA). A glycan (N-linked (GlcNAc...) asparagine) is linked at Asn119.

In terms of tissue distribution, expressed in secretory granules of many acinar cells in lacrimal gland and in scattered acinar cells of salivary glands.

The protein localises to the secreted. Modulates secretion by lacrimal acinar cells. This is Extracellular glycoprotein lacritin (LACRT) from Homo sapiens (Human).